The sequence spans 479 residues: Anaerobic nitric oxide reductase flavorubredoxin (479 aa).

The zinc metallo-hydrolase stretch occupies residues 30–210 (LRGSSYNSYL…PFSRLVTPKI (181 aa)). Fe cation is bound by residues His79, Glu81, Asp83, His147, Asp166, and His227. The region spanning 254 to 393 (ITIFYDTMSN…LCREHGREIA (140 aa)) is the Flavodoxin-like domain. FMN is bound by residues 260 to 264 (TMSNN) and 342 to 369 (AFGS…EMSL). The 57-residue stretch at 423–479 (GPRMQCSVCQWIYDPAKGEPMQDVAPGTPWSEVPDNFLCPECSLGKDVFEELASEAK) folds into the Rubredoxin-like domain. The Fe cation site is built by Cys428, Cys431, Cys461, and Cys464.

The protein in the N-terminal section; belongs to the zinc metallo-hydrolase group 3 family. As to quaternary structure, homotetramer. Fe cation serves as cofactor. The cofactor is FMN.

It localises to the cytoplasm. The protein operates within nitrogen metabolism; nitric oxide reduction. In terms of biological role, anaerobic nitric oxide reductase; uses NADH to detoxify nitric oxide (NO), protecting several 4Fe-4S NO-sensitive enzymes. Has at least 2 reductase partners, only one of which (NorW, flavorubredoxin reductase) has been identified. NO probably binds to the di-iron center; electrons enter from the reductase at rubredoxin and are transferred sequentially to the FMN center and the di-iron center. Also able to function as an aerobic oxygen reductase. This Escherichia coli (strain K12 / DH10B) protein is Anaerobic nitric oxide reductase flavorubredoxin (norV).